The primary structure comprises 96 residues: Small ribosomal subunit protein bS6 (96 aa).

This sequence belongs to the bacterial ribosomal protein bS6 family.

In terms of biological role, binds together with bS18 to 16S ribosomal RNA. In Natranaerobius thermophilus (strain ATCC BAA-1301 / DSM 18059 / JW/NM-WN-LF), this protein is Small ribosomal subunit protein bS6.